A 108-amino-acid polypeptide reads, in one-letter code: ATP-dependent Clp protease adapter protein ClpS (108 aa).

The segment covering 1-15 (MPRESSPDSHHEHGV) has biased composition (basic and acidic residues). The disordered stretch occupies residues 1–24 (MPRESSPDSHHEHGVAVEPARPEV).

This sequence belongs to the ClpS family. Binds to the N-terminal domain of the chaperone ClpA.

In terms of biological role, involved in the modulation of the specificity of the ClpAP-mediated ATP-dependent protein degradation. This is ATP-dependent Clp protease adapter protein ClpS from Stenotrophomonas maltophilia (strain R551-3).